We begin with the raw amino-acid sequence, 355 residues long: uncharacterized protein (355 aa).

The N-terminal stretch at 1–22 (MRLTHVTACICLLVAVAVLFSG) is a signal peptide.

This sequence belongs to the bacterial solute-binding protein 1 family. WtpA subfamily.

This is an uncharacterized protein from Methanoculleus marisnigri (strain ATCC 35101 / DSM 1498 / JR1).